The primary structure comprises 219 residues: tRNA (guanine-N(7)-)-methyltransferase (219 aa).

Residues D47, E72, N99, and D125 each contribute to the S-adenosyl-L-methionine site. The active site involves D125. Substrate-binding residues include K129 and D161.

Belongs to the class I-like SAM-binding methyltransferase superfamily. TrmB family.

It catalyses the reaction guanosine(46) in tRNA + S-adenosyl-L-methionine = N(7)-methylguanosine(46) in tRNA + S-adenosyl-L-homocysteine. The protein operates within tRNA modification; N(7)-methylguanine-tRNA biosynthesis. Its function is as follows. Catalyzes the formation of N(7)-methylguanine at position 46 (m7G46) in tRNA. In Nostoc sp. (strain PCC 7120 / SAG 25.82 / UTEX 2576), this protein is tRNA (guanine-N(7)-)-methyltransferase.